A 307-amino-acid polypeptide reads, in one-letter code: Membrane protein insertase YidC 2 (307 aa).

The signal sequence occupies residues 1-23; that stretch reads MKLTLNRILFSGLALSILLTLTG. Cysteine 24 is lipidated: N-palmitoyl cysteine. The S-diacylglycerol cysteine moiety is linked to residue cysteine 24. The next 5 membrane-spanning stretches (helical) occupy residues 58 to 78, 135 to 155, 179 to 199, 209 to 225, and 231 to 251; these read LGYG…ILPL, LGGI…AMYF, VLTA…MMAV, TMMY…SFSL, and LYWL…TYLL. Residues 263 to 307 form a disordered region; the sequence is YAKNPPKAYQSTSSRKDVTPSQNMEQANLPKKIKSNRNAGKQRKR. A compositionally biased stretch (polar residues) spans 271–288; the sequence is YQSTSSRKDVTPSQNMEQ. A compositionally biased stretch (basic residues) spans 293-307; the sequence is KKIKSNRNAGKQRKR.

The protein belongs to the OXA1/ALB3/YidC family. Type 2 subfamily.

It localises to the cell membrane. Required for the insertion and/or proper folding and/or complex formation of integral membrane proteins into the membrane. Involved in integration of membrane proteins that insert both dependently and independently of the Sec translocase complex, as well as at least some lipoproteins. This is Membrane protein insertase YidC 2 from Streptococcus pyogenes serotype M1.